We begin with the raw amino-acid sequence, 479 residues long: Aspartyl/glutamyl-tRNA(Asn/Gln) amidotransferase subunit B (479 aa).

The protein belongs to the GatB/GatE family. GatB subfamily. As to quaternary structure, heterotrimer of A, B and C subunits.

The enzyme catalyses L-glutamyl-tRNA(Gln) + L-glutamine + ATP + H2O = L-glutaminyl-tRNA(Gln) + L-glutamate + ADP + phosphate + H(+). It catalyses the reaction L-aspartyl-tRNA(Asn) + L-glutamine + ATP + H2O = L-asparaginyl-tRNA(Asn) + L-glutamate + ADP + phosphate + 2 H(+). Functionally, allows the formation of correctly charged Asn-tRNA(Asn) or Gln-tRNA(Gln) through the transamidation of misacylated Asp-tRNA(Asn) or Glu-tRNA(Gln) in organisms which lack either or both of asparaginyl-tRNA or glutaminyl-tRNA synthetases. The reaction takes place in the presence of glutamine and ATP through an activated phospho-Asp-tRNA(Asn) or phospho-Glu-tRNA(Gln). The chain is Aspartyl/glutamyl-tRNA(Asn/Gln) amidotransferase subunit B from Deinococcus radiodurans (strain ATCC 13939 / DSM 20539 / JCM 16871 / CCUG 27074 / LMG 4051 / NBRC 15346 / NCIMB 9279 / VKM B-1422 / R1).